Consider the following 874-residue polypeptide: Alanine--tRNA ligase (874 aa).

Zn(2+) is bound by residues His564, His568, Cys665, and His669.

This sequence belongs to the class-II aminoacyl-tRNA synthetase family. Zn(2+) serves as cofactor.

Its subcellular location is the cytoplasm. The enzyme catalyses tRNA(Ala) + L-alanine + ATP = L-alanyl-tRNA(Ala) + AMP + diphosphate. In terms of biological role, catalyzes the attachment of alanine to tRNA(Ala) in a two-step reaction: alanine is first activated by ATP to form Ala-AMP and then transferred to the acceptor end of tRNA(Ala). Also edits incorrectly charged Ser-tRNA(Ala) and Gly-tRNA(Ala) via its editing domain. The polypeptide is Alanine--tRNA ligase (Paraburkholderia phymatum (strain DSM 17167 / CIP 108236 / LMG 21445 / STM815) (Burkholderia phymatum)).